Consider the following 669-residue polypeptide: Glutaminase kidney isoform, mitochondrial (669 aa).

Residues 1-54 constitute a mitochondrion transit peptide; that stretch reads MMRLRGSGMLRDLLLRSPAGVSATLRRAQPLVTLCRRPRGGGRPAAGPAAAARL. The disordered stretch occupies residues 68 to 118; that stretch reads LARGLSSSPSEILQELGKGSTHPQPGVSPPAAPAAPGPKDGPGETDAFGNS. Pro residues predominate over residues 93-103; sequence GVSPPAAPAAP. Residues Lys-130 and Lys-164 each carry the N6-succinyllysine modification. Residue Ser-286 participates in substrate binding. At Lys-311 the chain carries N6-acetyllysine. Positions 315–322 are highly mobile activation loop; it reads GLRFNKLF. Asn-335, Glu-381, Asn-388, Tyr-414, Tyr-466, and Val-484 together coordinate substrate. 2 ANK repeats span residues 585-614 and 619-648; these read DSRT…VNPF and WNNT…QYTP. Positions 647–669 are disordered; the sequence is TPQGDSDNGKENQTVHKNLDGLL. Position 652 is a phosphoserine (Ser-652). Basic and acidic residues predominate over residues 653–669; it reads DNGKENQTVHKNLDGLL.

Belongs to the glutaminase family. As to quaternary structure, homotetramer, dimer of dimers. The tetramers can assemble into rod-like oligomers (in vitro), but the physiological significance of this is not clear. Interacts with RAF1 and MAP2K2. Interacts with ATCAY; the interaction is direct and may control GLS localization, negatively regulating its activity. Synthesized as a 74-kDa cytosolic precursor which is proteolytically processed by the mitochondrial-processing peptidase (MPP) via a 72-kDa intermediate to yield the mature mitochondrial 68- and 65-kDa subunits. As to expression, isoform 1 and isoform 3 are detected in brain cortex. Isoform 3 is highly expressed in astrocytoma, ganglioglioma and ependymoma. Isoform 1 is highly expressed in brain and kidney, but not detected in liver. Isoform 3 is highly expressed in heart and pancreas, detected at lower levels in placenta, lung, pancreas and kidney, but is not detected in liver. Isoform 2 is expressed in cardiac and skeletal muscle.

The protein localises to the mitochondrion. It is found in the cytoplasm. It localises to the cytosol. The protein resides in the mitochondrion matrix. It carries out the reaction L-glutamine + H2O = L-glutamate + NH4(+). Isoform 1 and isoform 3 are activated by phosphate. Inhibited by BPTES. BPTES binds between subunits and favors dissociation of the tetramer into dimers. Inhibited by 6-diazo-5-oxo-L-norleucine (DON). Enzyme activity is stimulated by phosphorylation. Catalyzes the first reaction in the primary pathway for the renal catabolism of glutamine. Plays a role in maintaining acid-base homeostasis. Regulates the levels of the neurotransmitter glutamate, the main excitatory neurotransmitter in the brain. In terms of biological role, lacks catalytic activity. This is Glutaminase kidney isoform, mitochondrial (GLS) from Homo sapiens (Human).